A 1320-amino-acid polypeptide reads, in one-letter code: Collagen alpha-1(XX) chain (1320 aa).

The N-terminal stretch at 1–25 is a signal peptide; that stretch reads MSLQGSYQHFCLWMFLGTTLALGQG. Positions 27-118 constitute a Fibronectin type-III 1 domain; that stretch reads VSSRLRLAVL…EFVIEDLKSQ (92 aa). Residues 177–352 form the VWFA domain; the sequence is DIIFLVDGSW…DTLAPLLSRL (176 aa). 5 Fibronectin type-III domains span residues 377–466, 467–556, 557–644, 646–735, and 740–831; these read TPTR…APLP, PPGP…SALG, PPRH…TQKA, SPGQ…TPSA, and PPSS…ACPA. A glycan (N-linked (GlcNAc...) asparagine) is linked at asparagine 433. 2 N-linked (GlcNAc...) asparagine glycosylation sites follow: asparagine 569 and asparagine 604. Residues 728-752 form a disordered region; sequence SLRYTPSAASRSPPSSLALSSETPN. A compositionally biased stretch (low complexity) spans 733–748; sequence PSAASRSPPSSLALSS. N-linked (GlcNAc...) asparagine glycosylation is present at asparagine 771. A Laminin G-like domain is found at 840–1035; that stretch reads GFDLMVAFGL…LQMLQIVCSD (196 aa). Disordered stretches follow at residues 1064 to 1220 and 1291 to 1320; these read YSSE…EKGE and LRPE…ESLE. The segment covering 1069–1080 has biased composition (pro residues); sequence PGPPGPQGPPGL. 3 Collagen-like domains span residues 1069 to 1122, 1125 to 1174, and 1165 to 1221; these read PGPP…TQGR, QGPM…GPAG, and GMRG…KGEP. Positions 1081-1093 are enriched in low complexity; the sequence is PGRNGPPGQQGHP. Residues 1106-1115 show a composition bias toward gly residues; that stretch reads GPEGPGGQQG. A compositionally biased stretch (low complexity) spans 1140 to 1152; the sequence is QGLSGLQGLSGQQ. The segment covering 1302-1320 has biased composition (polar residues); it reads ISHTSNPRLQEVQTPESLE.

Its subcellular location is the secreted. It localises to the extracellular space. Its function is as follows. Probable collagen protein. This Mus musculus (Mouse) protein is Collagen alpha-1(XX) chain (Col20a1).